A 343-amino-acid chain; its full sequence is Tetraacyldisaccharide 4'-kinase (343 aa).

47–54 (SVGGTGKT) contacts ATP.

This sequence belongs to the LpxK family.

The enzyme catalyses a lipid A disaccharide + ATP = a lipid IVA + ADP + H(+). Its pathway is glycolipid biosynthesis; lipid IV(A) biosynthesis; lipid IV(A) from (3R)-3-hydroxytetradecanoyl-[acyl-carrier-protein] and UDP-N-acetyl-alpha-D-glucosamine: step 6/6. Its function is as follows. Transfers the gamma-phosphate of ATP to the 4'-position of a tetraacyldisaccharide 1-phosphate intermediate (termed DS-1-P) to form tetraacyldisaccharide 1,4'-bis-phosphate (lipid IVA). The polypeptide is Tetraacyldisaccharide 4'-kinase (Flavobacterium psychrophilum (strain ATCC 49511 / DSM 21280 / CIP 103535 / JIP02/86)).